A 410-amino-acid polypeptide reads, in one-letter code: Imidazolonepropionase (410 aa).

Fe(3+) is bound by residues His73 and His75. Residues His73 and His75 each contribute to the Zn(2+) site. Arg82, Tyr145, and His178 together coordinate 4-imidazolone-5-propanoate. Residue Tyr145 coordinates N-formimidoyl-L-glutamate. His243 is a Fe(3+) binding site. A Zn(2+)-binding site is contributed by His243. Gln246 lines the 4-imidazolone-5-propanoate pocket. Asp318 serves as a coordination point for Fe(3+). Asp318 lines the Zn(2+) pocket. Residues Asn320 and Gly322 each coordinate N-formimidoyl-L-glutamate. Residue Ser323 participates in 4-imidazolone-5-propanoate binding.

This sequence belongs to the metallo-dependent hydrolases superfamily. HutI family. Requires Zn(2+) as cofactor. Fe(3+) serves as cofactor.

It localises to the cytoplasm. The enzyme catalyses 4-imidazolone-5-propanoate + H2O = N-formimidoyl-L-glutamate. Its pathway is amino-acid degradation; L-histidine degradation into L-glutamate; N-formimidoyl-L-glutamate from L-histidine: step 3/3. In terms of biological role, catalyzes the hydrolytic cleavage of the carbon-nitrogen bond in imidazolone-5-propanoate to yield N-formimidoyl-L-glutamate. It is the third step in the universal histidine degradation pathway. The protein is Imidazolonepropionase of Shewanella baltica (strain OS223).